A 127-amino-acid polypeptide reads, in one-letter code: Large ribosomal subunit protein bL20 (127 aa).

This sequence belongs to the bacterial ribosomal protein bL20 family.

Functionally, binds directly to 23S ribosomal RNA and is necessary for the in vitro assembly process of the 50S ribosomal subunit. It is not involved in the protein synthesizing functions of that subunit. The protein is Large ribosomal subunit protein bL20 of Corynebacterium diphtheriae (strain ATCC 700971 / NCTC 13129 / Biotype gravis).